A 221-amino-acid chain; its full sequence is Adenylate kinase (221 aa).

Position 10–15 (10–15) interacts with ATP; sequence GAGKGT. Residues 30-59 form an NMP region; sequence STGDMLRAAVKAGTPLGLEAKRFMDAGELV. Residues threonine 31, arginine 36, 57-59, 85-88, and glutamine 92 contribute to the AMP site; these read ELV and GFPR. The interval 122 to 159 is LID; sequence GRRSHAASGRTYHVKFNPPKVEGVDDMTGEPLIQRDDD. ATP contacts are provided by residues arginine 123 and 132 to 133; that span reads TY. Residues arginine 156 and arginine 167 each contribute to the AMP site. Glycine 207 lines the ATP pocket.

The protein belongs to the adenylate kinase family. In terms of assembly, monomer.

Its subcellular location is the cytoplasm. It carries out the reaction AMP + ATP = 2 ADP. The protein operates within purine metabolism; AMP biosynthesis via salvage pathway; AMP from ADP: step 1/1. Catalyzes the reversible transfer of the terminal phosphate group between ATP and AMP. Plays an important role in cellular energy homeostasis and in adenine nucleotide metabolism. The protein is Adenylate kinase of Paraburkholderia phytofirmans (strain DSM 17436 / LMG 22146 / PsJN) (Burkholderia phytofirmans).